Reading from the N-terminus, the 122-residue chain is Large ribosomal subunit protein uL14 (122 aa).

This sequence belongs to the universal ribosomal protein uL14 family. In terms of assembly, part of the 50S ribosomal subunit. Forms a cluster with proteins L3 and L19. In the 70S ribosome, L14 and L19 interact and together make contacts with the 16S rRNA in bridges B5 and B8.

In terms of biological role, binds to 23S rRNA. Forms part of two intersubunit bridges in the 70S ribosome. The protein is Large ribosomal subunit protein uL14 of Rhodospirillum rubrum (strain ATCC 11170 / ATH 1.1.1 / DSM 467 / LMG 4362 / NCIMB 8255 / S1).